Here is a 332-residue protein sequence, read N- to C-terminus: Biotin synthase (332 aa).

One can recognise a Radical SAM core domain in the interval 51–278 (RTIQLSTLMS…KSYVRLSAGR (228 aa)). [4Fe-4S] cluster is bound by residues C66, C70, and C73. C110, C141, C201, and R273 together coordinate [2Fe-2S] cluster.

This sequence belongs to the radical SAM superfamily. Biotin synthase family. In terms of assembly, homodimer. The cofactor is [4Fe-4S] cluster. [2Fe-2S] cluster is required as a cofactor.

The enzyme catalyses (4R,5S)-dethiobiotin + (sulfur carrier)-SH + 2 reduced [2Fe-2S]-[ferredoxin] + 2 S-adenosyl-L-methionine = (sulfur carrier)-H + biotin + 2 5'-deoxyadenosine + 2 L-methionine + 2 oxidized [2Fe-2S]-[ferredoxin]. The protein operates within cofactor biosynthesis; biotin biosynthesis; biotin from 7,8-diaminononanoate: step 2/2. Catalyzes the conversion of dethiobiotin (DTB) to biotin by the insertion of a sulfur atom into dethiobiotin via a radical-based mechanism. This chain is Biotin synthase, found in Haemophilus influenzae (strain PittGG).